A 168-amino-acid polypeptide reads, in one-letter code: Cytochrome c-type biogenesis protein CcmE (168 aa).

The Cytoplasmic segment spans residues 1–7 (MTRKKRR). Residues 8-28 (LYMLGLALLGLGTATALTLSA) traverse the membrane as a helical; Signal-anchor for type II membrane protein segment. The Periplasmic portion of the chain corresponds to 29 to 168 (FEENIVFFYS…KVHATTTLKP (140 aa)). His122 and Tyr126 together coordinate heme. The tract at residues 149–168 (SIYTPADSDDKVHATTTLKP) is disordered.

It belongs to the CcmE/CycJ family.

It is found in the cell inner membrane. Its function is as follows. Heme chaperone required for the biogenesis of c-type cytochromes. Transiently binds heme delivered by CcmC and transfers the heme to apo-cytochromes in a process facilitated by CcmF and CcmH. This Rhodospirillum centenum (strain ATCC 51521 / SW) protein is Cytochrome c-type biogenesis protein CcmE.